We begin with the raw amino-acid sequence, 332 residues long: MIKQDQRAERHIPVLLQPVLAGLMPLVGAKVIDGTFGAGGYTCALLKAGAEVIALDRDPHAISAGQSLVEEFFPRLRLVQMEFSQLDRVVEEKVDAVILDIGVSSMQLDEAERGFSFQKDGPLDMRMAQTGFTAGDVVNHLKARDLARIFKILGEERYAGRIARMIEKRRVVQPFLRTGDLAYAIEALIGRKPGDRIHPATRVFQALRIYVNDEIGELARGLFAAERILKPGGRLGVVSFHSLEDRMVKRFFSFRSGECMRSRYLPEIKTAPATFFPLFKGGITASEEELQQNPRSRSARLRIGVRTEAEALAADMKLFGLAEIASFEGGKK.

S-adenosyl-L-methionine-binding positions include 39 to 41, aspartate 56, phenylalanine 83, aspartate 100, and glutamine 107; that span reads GGY.

It belongs to the methyltransferase superfamily. RsmH family.

The protein localises to the cytoplasm. The enzyme catalyses cytidine(1402) in 16S rRNA + S-adenosyl-L-methionine = N(4)-methylcytidine(1402) in 16S rRNA + S-adenosyl-L-homocysteine + H(+). Functionally, specifically methylates the N4 position of cytidine in position 1402 (C1402) of 16S rRNA. This Bartonella grahamii (strain as4aup) protein is Ribosomal RNA small subunit methyltransferase H.